Here is a 115-residue protein sequence, read N- to C-terminus: Large ribosomal subunit protein bL20c (115 aa).

It belongs to the bacterial ribosomal protein bL20 family.

The protein localises to the plastid. It localises to the chloroplast. Binds directly to 23S ribosomal RNA and is necessary for the in vitro assembly process of the 50S ribosomal subunit. It is not involved in the protein synthesizing functions of that subunit. The sequence is that of Large ribosomal subunit protein bL20c (rpl20) from Mesostigma viride (Green alga).